The primary structure comprises 708 residues: Glycine--tRNA ligase beta subunit (708 aa).

Belongs to the class-II aminoacyl-tRNA synthetase family. In terms of assembly, tetramer of two alpha and two beta subunits.

Its subcellular location is the cytoplasm. The catalysed reaction is tRNA(Gly) + glycine + ATP = glycyl-tRNA(Gly) + AMP + diphosphate. This chain is Glycine--tRNA ligase beta subunit, found in Methylobacillus flagellatus (strain ATCC 51484 / DSM 6875 / VKM B-1610 / KT).